The following is a 130-amino-acid chain: MASSFWKGVVGIGLFALAHAAFSAAQHRSYMRLTEKENETLPIDIVLQTLLSFVITCYGIVHISGEFKDMDASSELKNKTFDTLRNHPSFYLFNHRGRVLFRTPEQEPSTPNAQALPSNPLRLRKLENFH.

Topologically, residues 1–3 (MAS) are cytoplasmic. The helical transmembrane segment at 4 to 22 (SFWKGVVGIGLFALAHAAF) threads the bilayer. Over 23 to 43 (SAAQHRSYMRLTEKENETLPI) the chain is Lumenal. The chain crosses the membrane as a helical span at residues 44–63 (DIVLQTLLSFVITCYGIVHI). Topologically, residues 64–130 (SGEFKDMDAS…LRLRKLENFH (67 aa)) are cytoplasmic.

The protein belongs to the membrane magnesium transporter (TC 1.A.67) family. Component of the ER membrane protein complex (EMC).

Its subcellular location is the endoplasmic reticulum membrane. The protein localises to the golgi apparatus membrane. It localises to the early endosome membrane. Its function is as follows. Part of the endoplasmic reticulum membrane protein complex (EMC) that enables the energy-independent insertion into endoplasmic reticulum membranes of newly synthesized membrane proteins. Preferentially accommodates proteins with transmembrane domains that are weakly hydrophobic or contain destabilizing features such as charged and aromatic residues. Involved in the cotranslational insertion of multi-pass membrane proteins in which stop-transfer membrane-anchor sequences become ER membrane spanning helices. It is also required for the post-translational insertion of tail-anchored/TA proteins in endoplasmic reticulum membranes. By mediating the proper cotranslational insertion of N-terminal transmembrane domains in an N-exo topology, with translocated N-terminus in the lumen of the ER, controls the topology of multi-pass membrane proteins like the G protein-coupled receptors. By regulating the insertion of various proteins in membranes, it is indirectly involved in many cellular processes. May be involved in Mg(2+) transport. The polypeptide is ER membrane protein complex subunit 5 (Danio rerio (Zebrafish)).